The following is a 72-amino-acid chain: uncharacterized protein (72 aa).

Belongs to the phage portal family. HK97 subfamily.

This is an uncharacterized protein from Rickettsia conorii (strain ATCC VR-613 / Malish 7).